The primary structure comprises 278 residues: Large ribosomal subunit protein uL2 (278 aa).

Residues 212–278 (NRHRGIRPQT…IISRKKHKKG (67 aa)) form a disordered region. Positions 257–278 (YKTRKKKASDKLIISRKKHKKG) are enriched in basic residues.

Belongs to the universal ribosomal protein uL2 family. Part of the 50S ribosomal subunit. Forms a bridge to the 30S subunit in the 70S ribosome.

One of the primary rRNA binding proteins. Required for association of the 30S and 50S subunits to form the 70S ribosome, for tRNA binding and peptide bond formation. It has been suggested to have peptidyltransferase activity; this is somewhat controversial. Makes several contacts with the 16S rRNA in the 70S ribosome. This chain is Large ribosomal subunit protein uL2, found in Helicobacter pylori (strain Shi470).